The primary structure comprises 438 residues: Xylose isomerase (438 aa).

Active-site residues include H100 and D103. 7 residues coordinate Mg(2+): E231, E267, H270, D295, D306, D308, and D338.

It belongs to the xylose isomerase family. As to quaternary structure, homotetramer. Mg(2+) is required as a cofactor.

The protein resides in the cytoplasm. It catalyses the reaction alpha-D-xylose = alpha-D-xylulofuranose. This Pseudomonas syringae pv. syringae (strain B728a) protein is Xylose isomerase.